Here is a 186-residue protein sequence, read N- to C-terminus: Dynactin subunit 3 (186 aa).

Ala2 is modified (N-acetylalanine). The stretch at 135–157 (QQQDQCVEITEESKALLEEYNKT) forms a coiled coil.

Belongs to the dynactin subunit 3 family. As to quaternary structure, subunit of dynactin, a multiprotein complex part of a tripartite complex with dynein and a adapter, such as BICDL1, BICD2 or HOOK3. The dynactin complex is built around ACTR1A/ACTB filament and consists of an actin-related filament composed of a shoulder domain, a pointed end and a barbed end. Its length is defined by its flexible shoulder domain. The soulder is composed of 2 DCTN1 subunits, 4 DCTN2 and 2 DCTN3. The 4 DCNT2 (via N-terminus) bind the ACTR1A filament and act as molecular rulers to determine the length. The pointed end is important for binding dynein-dynactin cargo adapters. Consists of 4 subunits: ACTR10, DCNT4, DCTN5 and DCTN6. The barbed end is composed of a CAPZA1:CAPZB heterodimers, which binds ACTR1A/ACTB filament and dynactin and stabilizes dynactin.

The protein resides in the cytoplasm. The protein localises to the cytoskeleton. It is found in the microtubule organizing center. Its subcellular location is the centrosome. It localises to the chromosome. The protein resides in the centromere. The protein localises to the kinetochore. It is found in the spindle. Its subcellular location is the cleavage furrow. It localises to the midbody. In terms of biological role, part of the dynactin complex that activates the molecular motor dynein for ultra-processive transport along microtubules. Together with dynein may be involved in spindle assembly and cytokinesis. The chain is Dynactin subunit 3 (DCTN3) from Bos taurus (Bovine).